Reading from the N-terminus, the 425-residue chain is Pre-mRNA-splicing factor RBM22 (425 aa).

Residues 159-186 (RNRPHICSFWVKGECKRGEECPYRHEKP) form a C3H1-type zinc finger. The RRM domain maps to 232–305 (TTLYIGGLGE…RRLNVKWGRS (74 aa)). Disordered stretches follow at residues 304–331 (RSQAARGKGEKDGVTESGIRLEPVPGLP) and 384–425 (HTMD…HGGP). Residues 389–399 (MAPPVPPPMAL) show a composition bias toward pro residues.

Belongs to the SLT11 family. As to quaternary structure, component of the pre-catalytic and catalytic spliceosome complexes. Component of the postcatalytic spliceosome P complex.

It is found in the nucleus. It localises to the cytoplasm. In terms of biological role, required for pre-mRNA splicing as component of the activated spliceosome. Involved in the first step of pre-mRNA splicing. Binds directly to the internal stem-loop (ISL) domain of the U6 snRNA and to the pre-mRNA intron near the 5' splice site during the activation and catalytic phases of the spliceosome cycle. Required for normal early embryogenesis. The chain is Pre-mRNA-splicing factor RBM22 (rbm22) from Danio rerio (Zebrafish).